The sequence spans 140 residues: Small ribosomal subunit protein uS12 (140 aa).

2 disordered regions span residues 1–20 (MPTINQLVRKGRKSKVVKSD) and 35–55 (QTNVSSPQKRGVCTRVGTMTP). Asp-102 carries the post-translational modification 3-methylthioaspartic acid. A disordered region spans residues 121–140 (DGRMQGRSKYGTKRPKAAKK). Positions 130–140 (YGTKRPKAAKK) are enriched in basic residues.

This sequence belongs to the universal ribosomal protein uS12 family. In terms of assembly, part of the 30S ribosomal subunit. Contacts proteins S8 and S17. May interact with IF1 in the 30S initiation complex.

Its function is as follows. With S4 and S5 plays an important role in translational accuracy. Interacts with and stabilizes bases of the 16S rRNA that are involved in tRNA selection in the A site and with the mRNA backbone. Located at the interface of the 30S and 50S subunits, it traverses the body of the 30S subunit contacting proteins on the other side and probably holding the rRNA structure together. The combined cluster of proteins S8, S12 and S17 appears to hold together the shoulder and platform of the 30S subunit. In Exiguobacterium sp. (strain ATCC BAA-1283 / AT1b), this protein is Small ribosomal subunit protein uS12.